The primary structure comprises 555 residues: Protein PLASTID TRANSCRIPTIONALLY ACTIVE 12, chloroplastic (555 aa).

Residues 1 to 58 constitute a chloroplast transit peptide; the sequence is MASCYNPWRLFPGMSTAVPAGPVTAPAHSRTCKSSKVFSALPHRRGLLFLGTRRARIK. 3 disordered regions span residues 80-100, 115-167, and 468-541; these read YFDS…SIPG, ARAP…EPDV, and SYNE…IDDS. A compositionally biased stretch (polar residues) spans 144-154; it reads QVTSASGTEGA. Composition is skewed to acidic residues over residues 471 to 480 and 490 to 502; these read EDSDDEDEDV and LEDE…DVAE. The span at 508-519 shows a compositional bias: polar residues; the sequence is NQNWSALKSTGQ. Over residues 521–538 the composition is skewed to basic and acidic residues; sequence EKPKEKSKKDEMTLKEAI.

In terms of assembly, component of the plastid-encoded plastid RNA polymerase (PEP) complex.

It localises to the plastid. The protein resides in the chloroplast stroma. Its subcellular location is the nucleus. Required for the activity of the plastid-encoded RNA polymerase (PEP) and full expression of genes transcribed by PEP. Required for the proper build-up and formation of the PEP-complex. Binds single-stranded (ss) DNA and RNA, but not double-stranded (ds) DNA. The sequence is that of Protein PLASTID TRANSCRIPTIONALLY ACTIVE 12, chloroplastic from Zea mays (Maize).